The sequence spans 711 residues: MTKNESYSGIDYFRFIAALLIVAIHTSPLFSFSETGNFIFTRIVAPVAVPFFFMTSGFFLISRYTCNAEKLGAFIKKTTLIYGVAILLYIPINVYNGYFKMDNLLPNIIKDIVFDGTLYHLWYLPASIIGAAIAWYLVKKVHYRKAFLIASILYIIGLFGDSYYGIVKSVSCLNVFYNLIFQLTDYTRNGIFFAPIFFVLGGYISDSPNRYRKKNYIRIYSLFCLMFGKTLTLQHFDIQKHDSMYVLLLPSVWCLFNLLLHFRGKRRTGLRTISLDQLYHSSVYDCCNTIVCAELLHLQSLLVENSLVHYIAVCFASVVLAVVITALLSSLKPKKAKHTADTDRAYLEINLNNLEHNVNTLQKAMSPKCELMAVVKAEAYGHGMYEVTTYFEPIGVFYLAVATIDEGIRLRKYGIFSEILILGYTSPSRAKELCKFELTQTLIDYRYLLLLNKQGYDIKAHIKIDTGMHRLGFSTEDKDKILAAFFLKHIKVAGIFTHLCAADSLEEKEVAFTNKPIGSFYKVLDWPKSSGLNIPKVNIQTSYGLWNIQSWNVIYQSGVALYGVLRSTNDKTKLETDLRACSFLKAKVVLIRKIKQGGSVGYSRAFTATRDSLIAILPIGYADGFPRNLSCGNSYVLIGGRQAPIVGKICMDQLAVDVTDIPNVKTGSIATLIGKDGKEEITAPMVAESAESITNELLSRMEHRLNIIRRA.

Over 1–14 (MTKNESYSGIDYFR) the chain is Cytoplasmic. Residues 15 to 35 (FIAALLIVAIHTSPLFSFSET) form a helical membrane-spanning segment. Over 36 to 37 (GN) the chain is Extracellular. A helical membrane pass occupies residues 38-58 (FIFTRIVAPVAVPFFFMTSGF). Residues 59-78 (FLISRYTCNAEKLGAFIKKT) are Cytoplasmic-facing. The helical transmembrane segment at 79–99 (TLIYGVAILLYIPINVYNGYF) threads the bilayer. Residues 100–117 (KMDNLLPNIIKDIVFDGT) lie on the Extracellular side of the membrane. A helical transmembrane segment spans residues 118–138 (LYHLWYLPASIIGAAIAWYLV). Residues 139 to 146 (KKVHYRKA) are Cytoplasmic-facing. Residues 147–167 (FLIASILYIIGLFGDSYYGIV) traverse the membrane as a helical segment. Residues 168–188 (KSVSCLNVFYNLIFQLTDYTR) are Extracellular-facing. Residues 189 to 209 (NGIFFAPIFFVLGGYISDSPN) form a helical membrane-spanning segment. The Cytoplasmic segment spans residues 210–241 (RYRKKNYIRIYSLFCLMFGKTLTLQHFDIQKH). The chain crosses the membrane as a helical span at residues 242-262 (DSMYVLLLPSVWCLFNLLLHF). The Extracellular segment spans residues 263 to 306 (RGKRRTGLRTISLDQLYHSSVYDCCNTIVCAELLHLQSLLVENS). A helical membrane pass occupies residues 307–327 (LVHYIAVCFASVVLAVVITAL). The Cytoplasmic portion of the chain corresponds to 328 to 711 (LSSLKPKKAK…EHRLNIIRRA (384 aa)). Positions 336-711 (AKHTADTDRA…EHRLNIIRRA (376 aa)) are racemase. Lys-376 (proton acceptor) is an active-site residue. Lys-376 bears the N6-(pyridoxal phosphate)lysine mark. Arg-470 serves as a coordination point for substrate. The Proton acceptor role is filled by Tyr-602. Position 651 (Met-651) interacts with substrate.

This sequence in the N-terminal section; belongs to the acyltransferase 3 family. It in the C-terminal section; belongs to the alanine racemase family. Requires pyridoxal 5'-phosphate as cofactor.

The protein localises to the cell membrane. The polypeptide is Amino-acid racemase (vanTG) (Enterococcus faecalis (Streptococcus faecalis)).